The sequence spans 346 residues: Biotin synthase (346 aa).

The Radical SAM core domain maps to 38 to 256 (QQVQVSTLLS…IAVARIMMPT (219 aa)). Residues C53, C57, and C60 each contribute to the [4Fe-4S] cluster site. Positions 97, 128, 188, and 260 each coordinate [2Fe-2S] cluster.

Belongs to the radical SAM superfamily. Biotin synthase family. In terms of assembly, homodimer. It depends on [4Fe-4S] cluster as a cofactor. Requires [2Fe-2S] cluster as cofactor.

It carries out the reaction (4R,5S)-dethiobiotin + (sulfur carrier)-SH + 2 reduced [2Fe-2S]-[ferredoxin] + 2 S-adenosyl-L-methionine = (sulfur carrier)-H + biotin + 2 5'-deoxyadenosine + 2 L-methionine + 2 oxidized [2Fe-2S]-[ferredoxin]. It participates in cofactor biosynthesis; biotin biosynthesis; biotin from 7,8-diaminononanoate: step 2/2. Functionally, catalyzes the conversion of dethiobiotin (DTB) to biotin by the insertion of a sulfur atom into dethiobiotin via a radical-based mechanism. The chain is Biotin synthase from Salmonella gallinarum (strain 287/91 / NCTC 13346).